Consider the following 108-residue polypeptide: Putative transmembrane protein ORF108 (108 aa).

Transmembrane regions (helical) follow at residues 11–31 (FIMGLFPLLAVILISSNSSII), 33–53 (IAMTVIIFGWIIYETLITVHF), and 69–89 (VGFLGVLCLDKFPFGIILLII).

The protein localises to the host membrane. The sequence is that of Putative transmembrane protein ORF108 from Acidianus hospitalis (AFV-1).